We begin with the raw amino-acid sequence, 201 residues long: MEKFTKLTGVAAPMPIVNVDTDMIIPKDYLKTIKRTGLGTGLFAEMRYNDDGSENPDFVLNKPAYRKAQILVAGDNFGCGSSREHAPWALLDFGIRCVISTSFADIFYNNCFKNGVLPITVSPEDLEKLMDDASRGSNATLSVDLEAKEIRGPDGGVVKFDLDDFKRHCMLNGLDDIGLTMEKAGAIASFEKKNAEQRPWA.

The protein belongs to the LeuD family. LeuD type 1 subfamily. Heterodimer of LeuC and LeuD.

The catalysed reaction is (2R,3S)-3-isopropylmalate = (2S)-2-isopropylmalate. Its pathway is amino-acid biosynthesis; L-leucine biosynthesis; L-leucine from 3-methyl-2-oxobutanoate: step 2/4. In terms of biological role, catalyzes the isomerization between 2-isopropylmalate and 3-isopropylmalate, via the formation of 2-isopropylmaleate. This Mesorhizobium japonicum (strain LMG 29417 / CECT 9101 / MAFF 303099) (Mesorhizobium loti (strain MAFF 303099)) protein is 3-isopropylmalate dehydratase small subunit.